The following is a 1392-amino-acid chain: ATP-dependent helicase/nuclease subunit A (1392 aa).

The region spanning 4–595 (FKPTPAQSKA…IVLGENFRSM (592 aa)) is the UvrD-like helicase ATP-binding domain. 25-32 (ASAGSGKT) contributes to the ATP binding site. The UvrD-like helicase C-terminal domain occupies 623–929 (AHLKYAATYY…NVMTIHGSKG (307 aa)).

The protein belongs to the helicase family. AddA subfamily. Heterodimer of AddA and AddB/RexB. It depends on Mg(2+) as a cofactor.

It carries out the reaction Couples ATP hydrolysis with the unwinding of duplex DNA by translocating in the 3'-5' direction.. The catalysed reaction is ATP + H2O = ADP + phosphate + H(+). The heterodimer acts as both an ATP-dependent DNA helicase and an ATP-dependent, dual-direction single-stranded exonuclease. Recognizes the chi site generating a DNA molecule suitable for the initiation of homologous recombination. The AddA nuclease domain is required for chi fragment generation; this subunit has the helicase and 3' -&gt; 5' nuclease activities. This Limosilactobacillus reuteri subsp. reuteri (strain JCM 1112) (Lactobacillus reuteri) protein is ATP-dependent helicase/nuclease subunit A.